The chain runs to 255 residues: U2 small nuclear ribonucleoprotein A' (255 aa).

LRR repeat units lie at residues 20–41 (RDRE…GATL), 43–64 (QFDA…PLLR), 65–86 (RLKT…LDQA), and 89–110 (CLTE…DPLA). The 39-residue stretch at 123–161 (NPVTNKKHYRLYVIYKVPQVRVLDFQKVKLKERQEAEKM) folds into the LRRCT domain. An N6-acetyllysine; alternate modification is found at Lys-172. Lys-172 participates in a covalent cross-link: Glycyl lysine isopeptide (Lys-Gly) (interchain with G-Cter in SUMO2); alternate. 2 positions are modified to phosphoserine: Ser-178 and Ser-197. Positions 179–199 (KTFNPGAGLPTDKKKGGPSAG) are disordered. Lys-221 is covalently cross-linked (Glycyl lysine isopeptide (Lys-Gly) (interchain with G-Cter in SUMO2)). A disordered region spans residues 222–255 (GLLQSGQIPGRERRSGPSDEGEEEIEDDTVTNGS). A phosphoserine mark is found at Ser-236 and Ser-255. The span at 240 to 255 (DEGEEEIEDDTVTNGS) shows a compositional bias: acidic residues.

The protein belongs to the U2 small nuclear ribonucleoprotein A family. Identified in the spliceosome B complex. Identified in the spliceosome C complex. Found in a pre-mRNA splicing complex with SFRS4, SFRS5, SNRNP70, SNRPA1, SRRM1 and SRRM2. Found in a pre-mRNA exonic splicing enhancer (ESE) complex with SNRNP70, SNRPA1, SRRM1 and TRA2B. Contributes to the binding of stem loop IV of U2 snRNA with SNRPB2.

It is found in the nucleus. In terms of biological role, involved in pre-mRNA splicing as component of the spliceosome. Associated with sn-RNP U2, where it contributes to the binding of stem loop IV of U2 snRNA. In Mus musculus (Mouse), this protein is U2 small nuclear ribonucleoprotein A' (Snrpa1).